Consider the following 241-residue polypeptide: 4-hydroxy-tetrahydrodipicolinate reductase (241 aa).

NAD(+) contacts are provided by residues 7 to 12 (GVNGHM), 74 to 76 (GTT), and 98 to 101 (STNM). The active-site Proton donor/acceptor is the His-131. His-132 contacts (S)-2,3,4,5-tetrahydrodipicolinate. Lys-135 acts as the Proton donor in catalysis. Residue 141–142 (GS) coordinates (S)-2,3,4,5-tetrahydrodipicolinate.

The protein belongs to the DapB family.

Its subcellular location is the cytoplasm. The catalysed reaction is (S)-2,3,4,5-tetrahydrodipicolinate + NAD(+) + H2O = (2S,4S)-4-hydroxy-2,3,4,5-tetrahydrodipicolinate + NADH + H(+). It catalyses the reaction (S)-2,3,4,5-tetrahydrodipicolinate + NADP(+) + H2O = (2S,4S)-4-hydroxy-2,3,4,5-tetrahydrodipicolinate + NADPH + H(+). It functions in the pathway amino-acid biosynthesis; L-lysine biosynthesis via DAP pathway; (S)-tetrahydrodipicolinate from L-aspartate: step 4/4. Its function is as follows. Catalyzes the conversion of 4-hydroxy-tetrahydrodipicolinate (HTPA) to tetrahydrodipicolinate. This is 4-hydroxy-tetrahydrodipicolinate reductase from Alkaliphilus oremlandii (strain OhILAs) (Clostridium oremlandii (strain OhILAs)).